We begin with the raw amino-acid sequence, 209 residues long: HTH-type transcriptional repressor BepR (209 aa).

The 61-residue stretch at A9–Q69 folds into the HTH tetR-type domain. The segment at residues T32–F51 is a DNA-binding region (H-T-H motif).

Its function is as follows. Represses expression of bepDE. The chain is HTH-type transcriptional repressor BepR (bepR) from Brucella suis biovar 1 (strain 1330).